A 450-amino-acid chain; its full sequence is Tubulin alpha chain (450 aa).

GTP is bound at residue Gln11. Lys40 is modified (N6-acetyllysine). The GTP site is built by Glu71, Gly144, Thr145, Thr179, Asn206, and Asn228. Glu71 provides a ligand contact to Mg(2+). Glu254 is an active-site residue.

This sequence belongs to the tubulin family. Dimer of alpha and beta chains. A typical microtubule is a hollow water-filled tube with an outer diameter of 25 nm and an inner diameter of 15 nM. Alpha-beta heterodimers associate head-to-tail to form protofilaments running lengthwise along the microtubule wall with the beta-tubulin subunit facing the microtubule plus end conferring a structural polarity. Microtubules usually have 13 protofilaments but different protofilament numbers can be found in some organisms and specialized cells. Mg(2+) is required as a cofactor. Post-translationally, undergoes a tyrosination/detyrosination cycle, the cyclic removal and re-addition of a C-terminal tyrosine residue by the enzymes tubulin tyrosine carboxypeptidase (TTCP) and tubulin tyrosine ligase (TTL), respectively. In terms of processing, acetylation of alpha chains at Lys-40 stabilizes microtubules and affects affinity and processivity of microtubule motors. This modification has a role in multiple cellular functions, ranging from cell motility, cell cycle progression or cell differentiation to intracellular trafficking and signaling.

The protein localises to the cytoplasm. Its subcellular location is the cytoskeleton. The catalysed reaction is GTP + H2O = GDP + phosphate + H(+). Functionally, tubulin is the major constituent of microtubules, a cylinder consisting of laterally associated linear protofilaments composed of alpha- and beta-tubulin heterodimers. Microtubules grow by the addition of GTP-tubulin dimers to the microtubule end, where a stabilizing cap forms. Below the cap, tubulin dimers are in GDP-bound state, owing to GTPase activity of alpha-tubulin. The protein is Tubulin alpha chain (TUBA) of Prunus dulcis (Almond).